Reading from the N-terminus, the 261-residue chain is Triosephosphate isomerase (261 aa).

Substrate is bound at residue asparagine 10–lysine 12. Histidine 100 functions as the Electrophile in the catalytic mechanism. Glutamate 172 acts as the Proton acceptor in catalysis. Substrate is bound by residues glycine 178, serine 218, and glycine 239 to glycine 240.

It belongs to the triosephosphate isomerase family. Homodimer.

The protein resides in the cytoplasm. It carries out the reaction D-glyceraldehyde 3-phosphate = dihydroxyacetone phosphate. It participates in carbohydrate biosynthesis; gluconeogenesis. Its pathway is carbohydrate degradation; glycolysis; D-glyceraldehyde 3-phosphate from glycerone phosphate: step 1/1. Involved in the gluconeogenesis. Catalyzes stereospecifically the conversion of dihydroxyacetone phosphate (DHAP) to D-glyceraldehyde-3-phosphate (G3P). The protein is Triosephosphate isomerase of Mycobacteroides abscessus (strain ATCC 19977 / DSM 44196 / CCUG 20993 / CIP 104536 / JCM 13569 / NCTC 13031 / TMC 1543 / L948) (Mycobacterium abscessus).